The sequence spans 38 residues: Alpha-conotoxin LvIC (38 aa).

A propeptide spanning residues serine 1–threonine 21 is cleaved from the precursor. Disulfide bonds link cysteine 23–cysteine 29 and cysteine 24–cysteine 34. Glutamine 35 is modified (glutamine amide).

This sequence belongs to the conotoxin A superfamily. Post-translationally, the two analogs ([DelQ14]LvIC and [D1G,DelQ14]LvIC) are amidated at their N-terminal Cys. As to expression, expressed by the venom gland.

It localises to the secreted. In terms of biological role, alpha-conotoxins bind to the nicotinic acetylcholine receptors (nAChR) and inhibit them. This synthetic peptide inhibits rat alpha-6/alpha-3-beta-4 nAChR (IC(50)=3.3 uM). The chain is Alpha-conotoxin LvIC from Conus lividus (Livid cone).